Reading from the N-terminus, the 404-residue chain is UBP1-associated protein 2C (404 aa).

Residues Met-1–Leu-29 are disordered. 2 RRM domains span residues Arg-75–Ser-152 and Arg-167–Gly-248. Disordered stretches follow at residues Lys-246–Gly-270 and Gly-344–Tyr-404.

Expressed in root apical and lateral meristems, young leaves and embryos.

It is found in the nucleus. Heterogeneous nuclear ribonucleoprotein (hnRNP)-like protein that acts as a component of a complex regulating the turnover of mRNAs in the nucleus. Binds with high affinity to RNA molecules that contain U-rich sequences in 3'-UTRs. May function in complex with UBP1 and contribute to the stabilization of mRNAs in the nucleus. The chain is UBP1-associated protein 2C (UBA2C) from Arabidopsis thaliana (Mouse-ear cress).